Consider the following 82-residue polypeptide: UPF0291 protein PEPE_0871 (82 aa).

Belongs to the UPF0291 family.

It localises to the cytoplasm. The chain is UPF0291 protein PEPE_0871 from Pediococcus pentosaceus (strain ATCC 25745 / CCUG 21536 / LMG 10740 / 183-1w).